The following is a 653-amino-acid chain: Fidgetin-like protein 2 (653 aa).

Disordered regions lie at residues 1 to 36 (MHWTPEHAQPLNQWPEQHLDVSSTTPSPAHKLELPP), 86 to 129 (ASFL…SGAL), and 216 to 240 (YGALPPPPGPPPAPYLTPGLPAPTP). A compositionally biased stretch (polar residues) spans 10-27 (PLNQWPEQHLDVSSTTPS). Positions 97 to 107 (EPWPGPEPPYP) are enriched in pro residues. A compositionally biased stretch (gly residues) spans 119–129 (KSGGGGGSGAL). Over residues 219–240 (LPPPPGPPPAPYLTPGLPAPTP) the composition is skewed to pro residues. ATP contacts are provided by residues alanine 395 and 435-440 (GAGKAL).

Belongs to the AAA ATPase family. The cofactor is Mg(2+).

The protein resides in the cytoplasm. The protein localises to the cell cortex. The catalysed reaction is ATP + H2O = ADP + phosphate + H(+). Microtubule-severing enzyme that negatively regulates cell migration and wound healing. In migrating cells, targets dynamic microtubules (MTs) at the leading edge and severs them, thereby suppressing motility. Microtubule severing releases ARHGEF2 which activates RHOA, which in turn regulates focal ahesion turnover via focal adhesion kinase, as opposed to F-actin polymerization, to suppress cell motility. Negative regulator of axon regeneration that suppresses axonal growth by selectively severing dynamic MTs in the distal axon shaft and growth cone. Contributes to proper cell branching during endothelial and neuronal development. The polypeptide is Fidgetin-like protein 2 (Homo sapiens (Human)).